The chain runs to 251 residues: Fibroblast growth factor 23 (251 aa).

The first 24 residues, 1–24 (MLGTCLRLLVGVLCTVCSLGTARA), serve as a signal peptide directing secretion. Cysteines 95 and 113 form a disulfide. Residues Thr171 and Thr178 are each glycosylated (O-linked (GalNAc) threonine). Residues 175 to 251 (RRHTRSAEDP…DRCRPFPRFV (77 aa)) form a disordered region. Basic and acidic residues predominate over residues 179 to 189 (RSAEDPPERDP). Position 180 is a phosphoserine; by FAM20C (Ser180).

It belongs to the heparin-binding growth factors family. In terms of assembly, interacts with FGFR1. Interacts with FGFR2, FGFR3 and FGFR4. Affinity between fibroblast growth factors (FGFs) and their receptors is increased by KL and heparan sulfate glycosaminoglycans that function as coreceptors. In terms of processing, following secretion this protein is inactivated by cleavage into a N-terminal fragment and a C-terminal fragment. The processing is effected by proprotein convertases. Post-translationally, O-glycosylated at Thr-171 and Thr-178 by GALNT3 and glycosylation of Thr-178 requires previous glycosylation at Thr171. Glycosylation is necessary for secretion; it blocks processing by proprotein convertases when the O-glycan is alpha 2,6-sialylated. Competition between proprotein convertase cleavage and block of cleavage by O-glycosylation determines the level of secreted active FGF23. Phosphorylation at Ser-180 mediated by FAM20C slows down glycosylation at Thr-178 notably. In terms of tissue distribution, mainly expressed in the brain and thymus at low levels. In brain; preferentially expressed in the ventrolateral thalamic nucleus.

The protein localises to the secreted. Its function is as follows. Regulator of phosphate homeostasis. Inhibits renal tubular phosphate transport by reducing SLC34A1 levels. Acts directly on the parathyroid to decrease PTH secretion. Regulator of vitamin-D metabolism. Negatively regulates osteoblasts differentiation and matrix mineralization. Up-regulates EGR1 expression in the presence of KL. In Mus musculus (Mouse), this protein is Fibroblast growth factor 23 (Fgf23).